The primary structure comprises 485 residues: Outer membrane protein OprM (485 aa).

A signal peptide spans 1–17 (MKRSFLSLAVAAVVLSG). Cysteine 18 carries N-palmitoyl cysteine lipidation. Cysteine 18 carries S-diacylglycerol cysteine lipidation.

This sequence belongs to the outer membrane factor (OMF) (TC 1.B.17) family. Component of the MexAB-OprM multidrug efflux complex, composed of six MexA subunits forming a hexameric tube, binding to a MexB trimer, which interact with the trimeric OprM outer membrane channel protein. The OprM homotrimer forms a 135 Angstroms-long pore. It consists of a beta-barrel, which is probably inserted in the outer membrane, and an alpha-barrel formed by alpha-helices which probably spans the periplasm. In the ground state the periplasmic end is closed, while the outer membrane end opening is 6-8 Angstroms in diameter. OprM does not directly contact MexB; instead, MexA joins MexB and OprM by forming a funnel-like hexamer anchored to the inner membrane. MexA may initially form a hexameric ring complex with MexB prior to OprM, then OprM undergoes a conformational change as it contacts MexA, allowing the periplasmic gate to open. It is thought that, under high intracellular substrate concentration, MexB ejects substrate into the tunnel formed by MexA-OprM; as the substrate level declines, conformational changes in MexB cause efflux to reduce and stop and the complex shifts to the closed state. MexB subunit acts as a substrate:proton antiporter and activity is enhanced significantly when in complex with MexA and OprM, in vitro.

The protein resides in the cell outer membrane. With respect to regulation, export of antibiotics and solvents is dramatically decreased in the presence of the protonophore carbonyl cyanide m-chlorophenylhydrazone (CCCP), therefore may be driven by a proton gradient. Antibiotic efflux is inhibited by pyridopyrimidine derivatives, such as ABI-PP, acting by binding to a hydrophobic pocket in MexB. Functionally, the outer membrane component of the MexAB-OprM efflux system that confers multidrug resistance. Functions as the major efflux pump for n-hexane and p-xylene efflux. Has been shown in one study to be involved in the active efflux of the autoinducer N-(3-oxododecanoyl) homoserine lactone, thereby playing an indirect role in quorum-sensing; but has been shown in another study not to be involved in efflux of this autoinducer. Over-expression of the pump increases antibiotic and solvent efflux capacities. Can replace the OprJ outer membrane component of the MexCD-OprJ pump; the antibiotics exported are those exported by the intact MexCD pump, showing that efflux substrate specificity is not conferred by this component. Serves as the outer membrane component for the MexXY efflux system. Implicated in the secretion of the siderophore pyoverdine. OprM is probably involved in the efflux of the siderophore across the outer membrane. The protein is Outer membrane protein OprM (oprM) of Pseudomonas aeruginosa (strain ATCC 15692 / DSM 22644 / CIP 104116 / JCM 14847 / LMG 12228 / 1C / PRS 101 / PAO1).